Consider the following 377-residue polypeptide: MAAACTRTLGKVGRLVLDTPTCRFTNTAAFVPRTSMRCQGRAYGTGSSGFKSRLLLAAPVRGSGRVLGCAFLLGGGFGLYQTIKLTLQHHLAEKESDASDLDTDLKLTLYQYKTCPFCSKVRAFLDYHRLPYEIVEVNPVMRQEIKWSTYRKVPILMVNGTVQLNDSSVIISALKTYISSKDKKISEILACYPEMKSKNDRGKDVIEFGNKYWVMVHDADADQLYPGKDSRKEEIKWRTWADDWLVHLISPNVYRTPTEALASFDYIVREGKFGSFEGFFAKYFGAAAMWIISKRLKYKHNLQADVRQDLYKAVNDWVAAIGKNKQFMGGDEPNLADLAVFGVLRVMEGLQSFDDMMEHTKVKKWYSRMQKATQHVS.

Topologically, residues 1–65 (MAAACTRTLG…LAAPVRGSGR (65 aa)) are lumenal. Residues 66–83 (VLGCAFLLGGGFGLYQTI) traverse the membrane as a helical segment. The GST N-terminal domain occupies 105–182 (LKLTLYQYKT…ALKTYISSKD (78 aa)). Glutathione is bound by residues V153 and 166-167 (DS). In terms of domain architecture, GST C-terminal spans 266-377 (YIVREGKFGS…RMQKATQHVS (112 aa)).

This sequence belongs to the GST superfamily. Homodimer.

The protein resides in the golgi apparatus membrane. It catalyses the reaction prostaglandin H2 = prostaglandin E2. It carries out the reaction prostaglandin H2 = (12S)-hydroxy-(5Z,8E,10E)-heptadecatrienoate + malonaldehyde. Its pathway is lipid metabolism; prostaglandin biosynthesis. Isomerase activity is increased by sulfhydril compounds. Dithiothreitol (DTT) is most effective, followed by glutathione (GSH) and 2-mercaptoethanol. Functionally, isomerase that catalyzes the conversion of PGH2 into the more stable prostaglandin E2 (PGE2) (in vitro). The biological function and the GSH-dependent property of PTGES2 is still under debate. In vivo, PTGES2 could form a complex with GSH and heme and would not participate in PGE2 synthesis but would catalyze the degradation of prostaglandin E2 H2 (PGH2) to 12(S)-hydroxy-5(Z),8(E),10(E)-heptadecatrienoic acid (HHT) and malondialdehyde (MDA). The protein is Prostaglandin E synthase 2 (ptges2) of Danio rerio (Zebrafish).